The following is a 76-amino-acid chain: UPF0291 protein GK1331 (76 aa).

Residues 57-76 form a disordered region; it reads PSGNDVTPKKLKESQRRRFH. Positions 63–76 are enriched in basic and acidic residues; the sequence is TPKKLKESQRRRFH.

The protein belongs to the UPF0291 family.

The protein resides in the cytoplasm. This is UPF0291 protein GK1331 from Geobacillus kaustophilus (strain HTA426).